A 32-amino-acid chain; its full sequence is Growth hormone-related protein 4 (32 aa).

Cysteines 4 and 11 form a disulfide.

This sequence belongs to the somatotropin/prolactin family. In terms of processing, glycosylated. In terms of tissue distribution, placental basal zone cells.

The protein resides in the secreted. The polypeptide is Growth hormone-related protein 4 (Rattus norvegicus (Rat)).